Here is a 703-residue protein sequence, read N- to C-terminus: Centrosomal protein of 63 kDa (703 aa).

Met-1 carries the post-translational modification N-acetylmethionine. Coiled coils occupy residues 22 to 199, 242 to 306, 353 to 533, and 676 to 703; these read EAEL…ESVE, MTVL…QHAV, LEGS…STQM, and HILE…TALK. Ser-278 carries the post-translational modification Phosphoserine.

It belongs to the CEP63 family. As to quaternary structure, interacts with CEP152 and CDK1; these interactions recruit both ligands to centrosomes. Interacts with CDK2, CDK5RAP2, WDR62, CEP90, KIAA0753/moonraker and CCDC14. CEP63, CDK5RAP2, CEP152, WDR62 are proposed to form a stepwise assembled complex at the centrosome forming a ring near parental centrioles. Interacts with CCDC57; the interaction is required for their location to proximal end of centrioles. Interacts with FXR1; promoting its stabilization. In terms of assembly, (Microbial infection) Interacts with zika virus serine protease NS3; this interaction disorganizes the centrosome. Polyubiquitinated via 'Lys-48'-linked ubiquitin, leading to its degradation. Deubiquitinated by USP36, promoting its stabilization.

It localises to the cytoplasm. The protein resides in the cytoskeleton. It is found in the microtubule organizing center. Its subcellular location is the centrosome. The protein localises to the centriole. It localises to the centriolar satellite. Its function is as follows. Required for normal spindle assembly. Plays a key role in mother-centriole-dependent centriole duplication; the function seems also to involve CEP152, CDK5RAP2 and WDR62 through a stepwise assembled complex at the centrosome that recruits CDK2 required for centriole duplication. Reported to be required for centrosomal recruitment of CEP152; however, this function has been questioned. Also recruits CDK1 to centrosomes. Plays a role in DNA damage response. Following DNA damage, such as double-strand breaks (DSBs), is removed from centrosomes; this leads to the inactivation of spindle assembly and delay in mitotic progression. Promotes stabilization of FXR1 protein by inhibiting FXR1 ubiquitination. This chain is Centrosomal protein of 63 kDa, found in Homo sapiens (Human).